We begin with the raw amino-acid sequence, 356 residues long: Dual-specificity RNA methyltransferase RlmN (356 aa).

Glutamate 95 functions as the Proton acceptor in the catalytic mechanism. A Radical SAM core domain is found at 101–332 (EDERGTLCIS…VTVIRDRRGE (232 aa)). A disulfide bond links cysteine 108 and cysteine 338. 3 residues coordinate [4Fe-4S] cluster: cysteine 115, cysteine 119, and cysteine 122. S-adenosyl-L-methionine is bound by residues 165–166 (GE), serine 197, 219–221 (SLH), and asparagine 295. The active-site S-methylcysteine intermediate is cysteine 338.

Belongs to the radical SAM superfamily. RlmN family. [4Fe-4S] cluster serves as cofactor.

It localises to the cytoplasm. It carries out the reaction adenosine(2503) in 23S rRNA + 2 reduced [2Fe-2S]-[ferredoxin] + 2 S-adenosyl-L-methionine = 2-methyladenosine(2503) in 23S rRNA + 5'-deoxyadenosine + L-methionine + 2 oxidized [2Fe-2S]-[ferredoxin] + S-adenosyl-L-homocysteine. The catalysed reaction is adenosine(37) in tRNA + 2 reduced [2Fe-2S]-[ferredoxin] + 2 S-adenosyl-L-methionine = 2-methyladenosine(37) in tRNA + 5'-deoxyadenosine + L-methionine + 2 oxidized [2Fe-2S]-[ferredoxin] + S-adenosyl-L-homocysteine. Functionally, specifically methylates position 2 of adenine 2503 in 23S rRNA and position 2 of adenine 37 in tRNAs. m2A2503 modification seems to play a crucial role in the proofreading step occurring at the peptidyl transferase center and thus would serve to optimize ribosomal fidelity. The polypeptide is Dual-specificity RNA methyltransferase RlmN (Magnetococcus marinus (strain ATCC BAA-1437 / JCM 17883 / MC-1)).